The following is a 44-amino-acid chain: Alpha-amylase inhibitor WDAI-3 (44 aa).

An intrachain disulfide couples C20 to C41.

It belongs to the protease inhibitor I6 (cereal trypsin/alpha-amylase inhibitor) family. As to quaternary structure, homodimer. Post-translationally, the disulfide bonds are essential for the inhibitor activity. In terms of tissue distribution, endosperm.

It localises to the secreted. In terms of biological role, alpha-amylase inhibitor. The protein is Alpha-amylase inhibitor WDAI-3 (IHA-B1-2) of Triticum aestivum (Wheat).